A 738-amino-acid chain; its full sequence is Zinc finger protein 235 (738 aa).

Positions 8–79 (VTFKDVAVAF…ELQTQRGKHS (72 aa)) constitute a KRAB domain. The segment at 263-285 (YQGNECEEAFNDSSSLELHKQVH) adopts a C2H2-type 1; degenerate zinc-finger fold. C2H2-type zinc fingers lie at residues 319–341 (YWCH…QRVH), 347–369 (YTCH…LPIH), 375–397 (YRCD…CRVH), 403–425 (YKCE…ERIH), 431–453 (YKCG…QRVH), 459–481 (YKCD…QRVH), 487–509 (YKCE…QRVH), 515–537 (FRCN…QRVH), 543–565 (YKCE…QRVH), 571–593 (YKCE…QSVH), 599–621 (FKCD…QRVH), 627–649 (YKCD…QIIH), 655–677 (FKCE…QRVH), 683–705 (YTCQ…QRVH), and 711–733 (YICD…QRVH).

This sequence belongs to the krueppel C2H2-type zinc-finger protein family.

The protein resides in the nucleus. Its function is as follows. May be involved in transcriptional regulation. In Homo sapiens (Human), this protein is Zinc finger protein 235 (ZNF235).